Consider the following 1509-residue polypeptide: DNA polymerase alpha catalytic subunit (1509 aa).

The disordered stretch occupies residues Met-1 to Ile-162. Basic and acidic residues-rich tracts occupy residues Glu-21–Gln-35 and Glu-42–Ser-79. Positions Arg-27–Asp-67 form a coiled coil. Residues Asp-80 to Ile-123 show a composition bias toward acidic residues. The span at Arg-127–Ser-137 shows a compositional bias: basic residues. Positions Lys-138–Val-147 are enriched in basic and acidic residues. Residues Lys-148–Glu-157 are compositionally biased toward basic residues. 2 coiled-coil regions span residues Ala-234–Lys-263 and Leu-958–Gln-989. Positions 1328, 1331, 1355, 1358, 1389, 1392, 1406, and 1411 each coordinate Zn(2+). A CysA-type zinc finger spans residues Cys-1328–Cys-1358. Positions Cys-1389 to Cys-1411 match the CysB motif motif.

The protein belongs to the DNA polymerase type-B family.

Its subcellular location is the nucleus. The catalysed reaction is DNA(n) + a 2'-deoxyribonucleoside 5'-triphosphate = DNA(n+1) + diphosphate. In terms of biological role, polymerase alpha in a complex with DNA primase is a replicative polymerase. The protein is DNA polymerase alpha catalytic subunit (pola1) of Dictyostelium discoideum (Social amoeba).